A 283-amino-acid polypeptide reads, in one-letter code: 4-diphosphocytidyl-2-C-methyl-D-erythritol kinase (283 aa).

K12 is an active-site residue. 94–104 (PAQAGLGGGSS) serves as a coordination point for ATP. The active site involves D136.

It belongs to the GHMP kinase family. IspE subfamily.

The catalysed reaction is 4-CDP-2-C-methyl-D-erythritol + ATP = 4-CDP-2-C-methyl-D-erythritol 2-phosphate + ADP + H(+). Its pathway is isoprenoid biosynthesis; isopentenyl diphosphate biosynthesis via DXP pathway; isopentenyl diphosphate from 1-deoxy-D-xylulose 5-phosphate: step 3/6. In terms of biological role, catalyzes the phosphorylation of the position 2 hydroxy group of 4-diphosphocytidyl-2C-methyl-D-erythritol. The chain is 4-diphosphocytidyl-2-C-methyl-D-erythritol kinase from Acidovorax ebreus (strain TPSY) (Diaphorobacter sp. (strain TPSY)).